Reading from the N-terminus, the 233-residue chain is Protein FAM204A (233 aa).

Disordered regions lie at residues 1-57 (MWSG…PSTE) and 79-127 (KFQE…ETQW). The span at 13 to 24 (SDVELNSDDDTT) shows a compositional bias: acidic residues. A compositionally biased stretch (basic and acidic residues) spans 34–46 (EGKEDGTFEKTEM). Residues 98-109 (EKKKRKRSRKGK) are compositionally biased toward basic residues. A coiled-coil region spans residues 144–164 (VKRKKVEKSGLEKRIDQAVEE).

The sequence is that of Protein FAM204A (FAM204A) from Bos taurus (Bovine).